Here is a 305-residue protein sequence, read N- to C-terminus: uncharacterized protein (305 aa).

Over residues M1–K10 the composition is skewed to basic residues. A disordered region spans residues M1–W30. Residues T16–N27 show a composition bias toward basic and acidic residues. S39 is subject to Phosphoserine. Residues Q92 to K101 show a composition bias toward polar residues. The segment at Q92 to E114 is disordered. S158 is modified (phosphoserine). Low complexity predominate over residues S197 to N208. Residues S197–S305 are disordered. Polar residues-rich tracts occupy residues T209–V221 and L231–N244. The span at G247–H293 shows a compositional bias: low complexity. Polar residues predominate over residues S294 to S305.

This is an uncharacterized protein from Rattus norvegicus (Rat).